The primary structure comprises 70 residues: Small ribosomal subunit protein bS21 (70 aa).

Belongs to the bacterial ribosomal protein bS21 family.

This is Small ribosomal subunit protein bS21 from Campylobacter hominis (strain ATCC BAA-381 / DSM 21671 / CCUG 45161 / LMG 19568 / NCTC 13146 / CH001A).